Here is a 633-residue protein sequence, read N- to C-terminus: Glutathione S-transferase C-terminal domain-containing protein (633 aa).

Residues 130 to 332 form the GST C-terminal domain; that stretch reads LGFKKTCLKA…QEVPGVKTAA (203 aa). The disordered stretch occupies residues 191–233; that stretch reads NDDKLRRQKLKQQKADGVGPPLTKGKAKSKVHTQETSEGLDSS. Polar residues predominate over residues 224-233; the sequence is QETSEGLDSS. Residue serine 233 is modified to Phosphoserine.

Belongs to the GSTCD family. In terms of tissue distribution, widely expressed in cell types relevant to airway function, including airway smooth muscle cells and epithelial cells.

Its subcellular location is the cytoplasm. In Homo sapiens (Human), this protein is Glutathione S-transferase C-terminal domain-containing protein (GSTCD).